The sequence spans 39 residues: MDLDFRVLVVLLPVLLAGGWALKNILPAALRQVQSFFSK.

The chain crosses the membrane as a helical span at residues 7 to 25; it reads VLVVLLPVLLAGGWALKNI.

The protein belongs to the PsbY family. In terms of assembly, PSII is composed of 1 copy each of membrane proteins PsbA, PsbB, PsbC, PsbD, PsbE, PsbF, PsbH, PsbI, PsbJ, PsbK, PsbL, PsbM, PsbT, PsbX, PsbY, PsbZ, Psb30/Ycf12, peripheral proteins PsbO, CyanoQ (PsbQ), PsbU, PsbV and a large number of cofactors. It forms dimeric complexes.

The protein localises to the cellular thylakoid membrane. In terms of biological role, loosely associated component of the core of photosystem II (PSII), it is not always seen in crystals. PSII is a light-driven water plastoquinone oxidoreductase, using light energy to abstract electrons from H(2)O, generating a proton gradient subsequently used for ATP formation. This chain is Photosystem II reaction center protein Y, found in Cyanothece sp. (strain PCC 7425 / ATCC 29141).